A 104-amino-acid chain; its full sequence is Flagellar hook-basal body complex protein FliE (104 aa).

This sequence belongs to the FliE family.

It is found in the bacterial flagellum basal body. The protein is Flagellar hook-basal body complex protein FliE of Salmonella agona (strain SL483).